The primary structure comprises 457 residues: Methylenetetrahydrofolate--tRNA-(uracil-5-)-methyltransferase TrmFO (457 aa).

12–17 provides a ligand contact to FAD; sequence GGGLAG.

This sequence belongs to the MnmG family. TrmFO subfamily. The cofactor is FAD.

Its subcellular location is the cytoplasm. The catalysed reaction is uridine(54) in tRNA + (6R)-5,10-methylene-5,6,7,8-tetrahydrofolate + NADH + H(+) = 5-methyluridine(54) in tRNA + (6S)-5,6,7,8-tetrahydrofolate + NAD(+). It carries out the reaction uridine(54) in tRNA + (6R)-5,10-methylene-5,6,7,8-tetrahydrofolate + NADPH + H(+) = 5-methyluridine(54) in tRNA + (6S)-5,6,7,8-tetrahydrofolate + NADP(+). Catalyzes the folate-dependent formation of 5-methyl-uridine at position 54 (M-5-U54) in all tRNAs. This Myxococcus xanthus (strain DK1622) protein is Methylenetetrahydrofolate--tRNA-(uracil-5-)-methyltransferase TrmFO.